The primary structure comprises 347 residues: NADH-ubiquinone oxidoreductase chain 2 (347 aa).

Transmembrane regions (helical) follow at residues 3–23, 25–45, 59–79, 96–116, 127–147, 149–169, 178–198, 201–221, 239–259, 274–294, and 326–346; these read PMTF…VLLS, HWFM…PVLM, YFLT…INTM, ILIT…FWVP, GLIL…QIYP, LNTN…GWGG, IMAY…TYNP, SLLN…LLII, IVTT…PLTG, NSLI…FFYM, and TAPL…LITL.

This sequence belongs to the complex I subunit 2 family. As to quaternary structure, core subunit of respiratory chain NADH dehydrogenase (Complex I) which is composed of 45 different subunits. Interacts with TMEM242.

It is found in the mitochondrion inner membrane. The catalysed reaction is a ubiquinone + NADH + 5 H(+)(in) = a ubiquinol + NAD(+) + 4 H(+)(out). In terms of biological role, core subunit of the mitochondrial membrane respiratory chain NADH dehydrogenase (Complex I) which catalyzes electron transfer from NADH through the respiratory chain, using ubiquinone as an electron acceptor. Essential for the catalytic activity and assembly of complex I. The protein is NADH-ubiquinone oxidoreductase chain 2 of Sylvisorex ollula (Greater forest shrew).